The following is a 198-amino-acid chain: Putative 3-methyladenine DNA glycosylase (198 aa).

It belongs to the DNA glycosylase MPG family.

In Natranaerobius thermophilus (strain ATCC BAA-1301 / DSM 18059 / JW/NM-WN-LF), this protein is Putative 3-methyladenine DNA glycosylase.